The primary structure comprises 298 residues: Probable endonuclease 4 (298 aa).

Residues histidine 70, histidine 111, glutamate 146, aspartate 180, histidine 183, histidine 215, aspartate 228, histidine 230, and glutamate 260 each coordinate Zn(2+).

The protein belongs to the AP endonuclease 2 family. Zn(2+) is required as a cofactor.

The enzyme catalyses Endonucleolytic cleavage to 5'-phosphooligonucleotide end-products.. Functionally, endonuclease IV plays a role in DNA repair. It cleaves phosphodiester bonds at apurinic or apyrimidinic (AP) sites, generating a 3'-hydroxyl group and a 5'-terminal sugar phosphate. This chain is Probable endonuclease 4, found in Halalkalibacterium halodurans (strain ATCC BAA-125 / DSM 18197 / FERM 7344 / JCM 9153 / C-125) (Bacillus halodurans).